A 411-amino-acid chain; its full sequence is Endo-1,4-beta-xylanase A (411 aa).

Residues 1–33 (MKKFKIRKLMARVLALALVFSTFFMVSKVDANA) form the signal peptide. One can recognise a GH10 domain in the interval 34–382 (ASYNLMETYG…KPAYDEVVKA (349 aa)). The active-site Proton donor is the glutamate 201. Glutamate 311 functions as the Nucleophile in the catalytic mechanism. The segment at 387 to 411 (FGNPGSFTPQPTITPQPTPTPSGQT) is disordered. Residues 398–411 (TITPQPTPTPSGQT) show a composition bias toward pro residues.

Belongs to the glycosyl hydrolase 10 (cellulase F) family.

The catalysed reaction is Endohydrolysis of (1-&gt;4)-beta-D-xylosidic linkages in xylans.. It functions in the pathway glycan degradation; xylan degradation. Its function is as follows. B.fibrisolvens is located in the rumen of ruminant animals, where it contributes to the animal's digestion of plant material by hydrolyzing hemicellulose with its xylanases. The protein is Endo-1,4-beta-xylanase A (xynA) of Butyrivibrio fibrisolvens.